A 649-amino-acid chain; its full sequence is 1-deoxy-D-xylulose-5-phosphate synthase 1 (649 aa).

Thiamine diphosphate contacts are provided by residues His79 and 120–122 (AHS). Mg(2+) is bound at residue Asp151. Residues 152–153 (GS), Asn180, Tyr289, and Glu371 each bind thiamine diphosphate. Asn180 contributes to the Mg(2+) binding site.

Belongs to the transketolase family. DXPS subfamily. In terms of assembly, homodimer. Mg(2+) is required as a cofactor. It depends on thiamine diphosphate as a cofactor.

The catalysed reaction is D-glyceraldehyde 3-phosphate + pyruvate + H(+) = 1-deoxy-D-xylulose 5-phosphate + CO2. Its pathway is metabolic intermediate biosynthesis; 1-deoxy-D-xylulose 5-phosphate biosynthesis; 1-deoxy-D-xylulose 5-phosphate from D-glyceraldehyde 3-phosphate and pyruvate: step 1/1. In terms of biological role, catalyzes the acyloin condensation reaction between C atoms 2 and 3 of pyruvate and glyceraldehyde 3-phosphate to yield 1-deoxy-D-xylulose-5-phosphate (DXP). The protein is 1-deoxy-D-xylulose-5-phosphate synthase 1 of Zymomonas mobilis subsp. mobilis (strain ATCC 31821 / ZM4 / CP4).